The chain runs to 81 residues: Protein L83L (81 aa).

Residues 1–28 (MDTSLKNNDGALEADNKNYQDYKDEPDK) form a disordered region. A compositionally biased stretch (basic and acidic residues) spans 14–28 (ADNKNYQDYKDEPDK).

Belongs to the asfivirus L83L family. As to quaternary structure, interacts with host IL1B.

It localises to the host cytoplasm. In terms of biological role, may subvert the host innate immune response by interacting with host IL1B and interfering with its function. The chain is Protein L83L from Ornithodoros (relapsing fever ticks).